The primary structure comprises 670 residues: ATP-dependent RNA helicase DDX18 (670 aa).

Polar residues-rich tracts occupy residues Ser-31–Asp-42 and Val-83–Ser-105. The tract at residues Ser-31–Gly-169 is disordered. Residues Met-117 to Pro-154 show a composition bias toward basic and acidic residues. Positions Phe-179–His-207 match the Q motif motif. The 176-residue stretch at Ile-210 to Tyr-385 folds into the Helicase ATP-binding domain. Ala-223–Thr-230 lines the ATP pocket. The short motif at Asp-333–Asp-336 is the DEAD box element. The 171-residue stretch at Gly-399–Ile-569 folds into the Helicase C-terminal domain.

The protein belongs to the DEAD box helicase family. DDX18/HAS1 subfamily. Interacts with NOL8; the interaction is RNA-dependent. Interacts with PRC2 complex components EZH2, SUZ2 and JARID2; these interactions prevent deposition of the repressive H3K27me3 mark onto rDNA in pluripotent cells.

The protein localises to the nucleus. Its subcellular location is the nucleolus. It localises to the chromosome. The enzyme catalyses ATP + H2O = ADP + phosphate + H(+). In terms of biological role, ATP-dependent RNA helicase that plays a role in the regulation of R-loop homeostasis in both endogenous R-loop-prone regions and at sites of DNA damage. At endogenous loci such as actively transcribed genes, may act as a helicase to resolve the formation of R-loop during transcription and prevent the interference of R-loop with DNA-replication machinery. Also participates in the removal of DNA-lesion-associated R-loop. Plays an essential role for establishing pluripotency during embryogenesis and for pluripotency maintenance in embryonic stem cells. Mechanistically, prevents the polycomb repressive complex 2 (PRC2) from accessing rDNA loci and protects the active chromatin status in nucleolus. This Homo sapiens (Human) protein is ATP-dependent RNA helicase DDX18 (DDX18).